The following is a 93-amino-acid chain: Pyrimidine/purine nucleoside phosphorylase (93 aa).

Belongs to the nucleoside phosphorylase PpnP family.

The enzyme catalyses a purine D-ribonucleoside + phosphate = a purine nucleobase + alpha-D-ribose 1-phosphate. The catalysed reaction is adenosine + phosphate = alpha-D-ribose 1-phosphate + adenine. It catalyses the reaction cytidine + phosphate = cytosine + alpha-D-ribose 1-phosphate. It carries out the reaction guanosine + phosphate = alpha-D-ribose 1-phosphate + guanine. The enzyme catalyses inosine + phosphate = alpha-D-ribose 1-phosphate + hypoxanthine. The catalysed reaction is thymidine + phosphate = 2-deoxy-alpha-D-ribose 1-phosphate + thymine. It catalyses the reaction uridine + phosphate = alpha-D-ribose 1-phosphate + uracil. It carries out the reaction xanthosine + phosphate = alpha-D-ribose 1-phosphate + xanthine. In terms of biological role, catalyzes the phosphorolysis of diverse nucleosides, yielding D-ribose 1-phosphate and the respective free bases. Can use uridine, adenosine, guanosine, cytidine, thymidine, inosine and xanthosine as substrates. Also catalyzes the reverse reactions. The chain is Pyrimidine/purine nucleoside phosphorylase from Vibrio vulnificus (strain CMCP6).